Here is a 635-residue protein sequence, read N- to C-terminus: DNA-directed RNA polymerase subunit gamma (635 aa).

Zn(2+) is bound by residues Cys74, Cys76, Cys89, and Cys92. Positions 471, 473, and 475 each coordinate Mg(2+).

It belongs to the RNA polymerase beta' chain family. RpoC1 subfamily. In terms of assembly, in cyanobacteria the RNAP catalytic core is composed of 2 alpha, 1 beta, 1 beta', 1 gamma and 1 omega subunit. When a sigma factor is associated with the core the holoenzyme is formed, which can initiate transcription. Mg(2+) serves as cofactor. Requires Zn(2+) as cofactor.

The catalysed reaction is RNA(n) + a ribonucleoside 5'-triphosphate = RNA(n+1) + diphosphate. In terms of biological role, DNA-dependent RNA polymerase catalyzes the transcription of DNA into RNA using the four ribonucleoside triphosphates as substrates. The protein is DNA-directed RNA polymerase subunit gamma of Prochlorococcus marinus (strain NATL2A).